Reading from the N-terminus, the 127-residue chain is MWLTKPSTPVSALLLLALALSPPGTQGRPQRSLAARVAELRPELFLPVTGTRLPPRASRSTEIFPRDLTLKDKFIKHFTGPVTFSAECSKHFHRLYHNTRDCSTPAYYKRCARLLTRLAVSPLCSQT.

An N-terminal signal peptide occupies residues Met1–Gly27. 2 disulfides stabilise this stretch: Cys88/Cys124 and Cys102/Cys111.

Belongs to the ALKAL family.

It is found in the secreted. The protein localises to the cell membrane. Its function is as follows. Cytokine that acts as a physiological ligand for receptor tyrosine kinase LTK, leading to its activation. Monomeric ALKAL1 binds to LTK, leading to LTK homodimerization and activation. In contrast to ALKAL2, does not act as a potent physiological ligand for ALK. The protein is ALK and LTK ligand 1 of Mus musculus (Mouse).